The chain runs to 570 residues: Periplasmic trehalase (570 aa).

The N-terminal stretch at 1–34 (MIPPEIRRSVLLQKAIKLALAGTLLTFASFSATA) is a signal peptide. Substrate is bound by residues R159, 166-167 (WD), N203, 212-214 (RSQ), 284-286 (RPE), and G317. Residues D319 and E503 each act as proton donor/acceptor in the active site. A substrate-binding site is contributed by E518. The disordered stretch occupies residues 544–570 (KPCDSVPSTRPASLSATPTKTPSAATQ). The span at 554-570 (PASLSATPTKTPSAATQ) shows a compositional bias: low complexity.

This sequence belongs to the glycosyl hydrolase 37 family. As to quaternary structure, monomer.

Its subcellular location is the periplasm. The enzyme catalyses alpha,alpha-trehalose + H2O = alpha-D-glucose + beta-D-glucose. Provides the cells with the ability to utilize trehalose at high osmolarity by splitting it into glucose molecules that can subsequently be taken up by the phosphotransferase-mediated uptake system. The chain is Periplasmic trehalase from Salmonella typhimurium (strain LT2 / SGSC1412 / ATCC 700720).